Reading from the N-terminus, the 1343-residue chain is DNA-directed RNA polymerase subunit beta (1343 aa).

It belongs to the RNA polymerase beta chain family. The RNAP catalytic core consists of 2 alpha, 1 beta, 1 beta' and 1 omega subunit. When a sigma factor is associated with the core the holoenzyme is formed, which can initiate transcription.

It carries out the reaction RNA(n) + a ribonucleoside 5'-triphosphate = RNA(n+1) + diphosphate. DNA-dependent RNA polymerase catalyzes the transcription of DNA into RNA using the four ribonucleoside triphosphates as substrates. The polypeptide is DNA-directed RNA polymerase subunit beta (Shewanella piezotolerans (strain WP3 / JCM 13877)).